A 507-amino-acid chain; its full sequence is Probable Xaa-Pro aminopeptidase HCAG_02413 (507 aa).

Asp283, Asp294, Glu431, and Glu469 together coordinate Mn(2+).

It belongs to the peptidase M24B family. The cofactor is Mn(2+).

It carries out the reaction Release of any N-terminal amino acid, including proline, that is linked to proline, even from a dipeptide or tripeptide.. Catalyzes the removal of a penultimate prolyl residue from the N-termini of peptides. This is Probable Xaa-Pro aminopeptidase HCAG_02413 from Ajellomyces capsulatus (strain NAm1 / WU24) (Darling's disease fungus).